We begin with the raw amino-acid sequence, 181 residues long: Acireductone dioxygenase (181 aa).

Residues H97, H99, E103, and H141 each coordinate Fe(2+). H97, H99, E103, and H141 together coordinate Ni(2+).

Belongs to the acireductone dioxygenase (ARD) family. Monomer. It depends on Fe(2+) as a cofactor. The cofactor is Ni(2+).

The catalysed reaction is 1,2-dihydroxy-5-(methylsulfanyl)pent-1-en-3-one + O2 = 3-(methylsulfanyl)propanoate + CO + formate + 2 H(+). It carries out the reaction 1,2-dihydroxy-5-(methylsulfanyl)pent-1-en-3-one + O2 = 4-methylsulfanyl-2-oxobutanoate + formate + 2 H(+). The protein operates within amino-acid biosynthesis; L-methionine biosynthesis via salvage pathway; L-methionine from S-methyl-5-thio-alpha-D-ribose 1-phosphate: step 5/6. In terms of biological role, catalyzes 2 different reactions between oxygen and the acireductone 1,2-dihydroxy-3-keto-5-methylthiopentene (DHK-MTPene) depending upon the metal bound in the active site. Fe-containing acireductone dioxygenase (Fe-ARD) produces formate and 2-keto-4-methylthiobutyrate (KMTB), the alpha-ketoacid precursor of methionine in the methionine recycle pathway. Ni-containing acireductone dioxygenase (Ni-ARD) produces methylthiopropionate, carbon monoxide and formate, and does not lie on the methionine recycle pathway. This Pseudomonas fluorescens (strain ATCC BAA-477 / NRRL B-23932 / Pf-5) protein is Acireductone dioxygenase.